A 396-amino-acid chain; its full sequence is Acetate kinase (396 aa).

Asparagine 7 provides a ligand contact to Mg(2+). Lysine 14 provides a ligand contact to ATP. Arginine 88 contacts substrate. Aspartate 145 (proton donor/acceptor) is an active-site residue. Residues 205 to 209 (HLGNG), 279 to 281 (DFR), and 327 to 331 (GIGEN) contribute to the ATP site. Residue glutamate 381 coordinates Mg(2+).

This sequence belongs to the acetokinase family. As to quaternary structure, homodimer. Requires Mg(2+) as cofactor. Mn(2+) serves as cofactor.

The protein resides in the cytoplasm. It catalyses the reaction acetate + ATP = acetyl phosphate + ADP. Its pathway is metabolic intermediate biosynthesis; acetyl-CoA biosynthesis; acetyl-CoA from acetate: step 1/2. Catalyzes the formation of acetyl phosphate from acetate and ATP. Can also catalyze the reverse reaction. The protein is Acetate kinase of Campylobacter jejuni subsp. doylei (strain ATCC BAA-1458 / RM4099 / 269.97).